Reading from the N-terminus, the 720-residue chain is Methionine--tRNA ligase (720 aa).

A 'HIGH' region motif is present at residues 27–37 (PYANGQIHIGH). Zn(2+)-binding residues include C158, C161, C171, and C174. Positions 348-352 (KMSKS) match the 'KMSKS' region motif. K351 provides a ligand contact to ATP. The 107-residue stretch at 614–720 (DFAKVDLRIA…SGAKPGMRVK (107 aa)) folds into the tRNA-binding domain.

This sequence belongs to the class-I aminoacyl-tRNA synthetase family. MetG type 1 subfamily. Homodimer. Zn(2+) serves as cofactor.

It localises to the cytoplasm. It catalyses the reaction tRNA(Met) + L-methionine + ATP = L-methionyl-tRNA(Met) + AMP + diphosphate. Its function is as follows. Is required not only for elongation of protein synthesis but also for the initiation of all mRNA translation through initiator tRNA(fMet) aminoacylation. In Burkholderia ambifaria (strain ATCC BAA-244 / DSM 16087 / CCUG 44356 / LMG 19182 / AMMD) (Burkholderia cepacia (strain AMMD)), this protein is Methionine--tRNA ligase.